We begin with the raw amino-acid sequence, 94 residues long: Phosphoribosyl-ATP pyrophosphatase (94 aa).

It belongs to the PRA-PH family.

The protein resides in the cytoplasm. It catalyses the reaction 1-(5-phospho-beta-D-ribosyl)-ATP + H2O = 1-(5-phospho-beta-D-ribosyl)-5'-AMP + diphosphate + H(+). It participates in amino-acid biosynthesis; L-histidine biosynthesis; L-histidine from 5-phospho-alpha-D-ribose 1-diphosphate: step 2/9. This chain is Phosphoribosyl-ATP pyrophosphatase, found in Pyrobaculum neutrophilum (strain DSM 2338 / JCM 9278 / NBRC 100436 / V24Sta) (Thermoproteus neutrophilus).